A 114-amino-acid chain; its full sequence is T cell receptor beta variable 28 (114 aa).

The N-terminal stretch at 1-26 (MGIRLLCRVAFCFLAVGLVDVKVTQS) is a signal peptide. The Ig-like domain maps to 27-114 (SRYLVKRTGE…TSMYLCASSL (88 aa)). Residues cysteine 42 and cysteine 110 are joined by a disulfide bond. Asparagine 103 carries N-linked (GlcNAc...) asparagine glycosylation.

In terms of assembly, alpha-beta TR is a heterodimer composed of an alpha and beta chain; disulfide-linked. The alpha-beta TR is associated with the transmembrane signaling CD3 coreceptor proteins to form the TR-CD3 (TcR or TCR). The assembly of alpha-beta TR heterodimers with CD3 occurs in the endoplasmic reticulum where a single alpha-beta TR heterodimer associates with one CD3D-CD3E heterodimer, one CD3G-CD3E heterodimer and one CD247 homodimer forming a stable octameric structure. CD3D-CD3E and CD3G-CD3E heterodimers preferentially associate with TR alpha and TR beta chains, respectively. The association of the CD247 homodimer is the last step of TcR assembly in the endoplasmic reticulum and is required for transport to the cell surface.

It is found in the cell membrane. In terms of biological role, v region of the variable domain of T cell receptor (TR) beta chain that participates in the antigen recognition. Alpha-beta T cell receptors are antigen specific receptors which are essential to the immune response and are present on the cell surface of T lymphocytes. Recognize peptide-major histocompatibility (MH) (pMH) complexes that are displayed by antigen presenting cells (APC), a prerequisite for efficient T cell adaptive immunity against pathogens. Binding of alpha-beta TR to pMH complex initiates TR-CD3 clustering on the cell surface and intracellular activation of LCK that phosphorylates the ITAM motifs of CD3G, CD3D, CD3E and CD247 enabling the recruitment of ZAP70. In turn ZAP70 phosphorylates LAT, which recruits numerous signaling molecules to form the LAT signalosome. The LAT signalosome propagates signal branching to three major signaling pathways, the calcium, the mitogen-activated protein kinase (MAPK) kinase and the nuclear factor NF-kappa-B (NF-kB) pathways, leading to the mobilization of transcription factors that are critical for gene expression and essential for T cell growth and differentiation. The T cell repertoire is generated in the thymus, by V-(D)-J rearrangement. This repertoire is then shaped by intrathymic selection events to generate a peripheral T cell pool of self-MH restricted, non-autoaggressive T cells. Post-thymic interaction of alpha-beta TR with the pMH complexes shapes TR structural and functional avidity. This is T cell receptor beta variable 28 from Homo sapiens (Human).